A 236-amino-acid chain; its full sequence is Probable methylthioribulose-1-phosphate dehydratase (236 aa).

The segment at 1 to 29 is disordered; sequence MQNVQQPKKRKLSDEIIAEDEDYQRDPEH. Residue cysteine 103 coordinates substrate. Zn(2+) contacts are provided by histidine 121, histidine 123, and histidine 201.

The protein belongs to the aldolase class II family. MtnB subfamily. Requires Zn(2+) as cofactor.

It is found in the cytoplasm. It carries out the reaction 5-(methylsulfanyl)-D-ribulose 1-phosphate = 5-methylsulfanyl-2,3-dioxopentyl phosphate + H2O. The protein operates within amino-acid biosynthesis; L-methionine biosynthesis via salvage pathway; L-methionine from S-methyl-5-thio-alpha-D-ribose 1-phosphate: step 2/6. Catalyzes the dehydration of methylthioribulose-1-phosphate (MTRu-1-P) into 2,3-diketo-5-methylthiopentyl-1-phosphate (DK-MTP-1-P). This is Probable methylthioribulose-1-phosphate dehydratase from Trichoplax adhaerens (Trichoplax reptans).